We begin with the raw amino-acid sequence, 322 residues long: Ribosomal RNA small subunit methyltransferase H (322 aa).

Residues 40–42, Asp60, Phe84, Asp106, and Gln113 contribute to the S-adenosyl-L-methionine site; that span reads GGH.

The protein belongs to the methyltransferase superfamily. RsmH family.

It is found in the cytoplasm. The catalysed reaction is cytidine(1402) in 16S rRNA + S-adenosyl-L-methionine = N(4)-methylcytidine(1402) in 16S rRNA + S-adenosyl-L-homocysteine + H(+). In terms of biological role, specifically methylates the N4 position of cytidine in position 1402 (C1402) of 16S rRNA. This is Ribosomal RNA small subunit methyltransferase H from Aggregatibacter aphrophilus (strain NJ8700) (Haemophilus aphrophilus).